A 316-amino-acid polypeptide reads, in one-letter code: Phosphatidylinositol mannoside acyltransferase (316 aa).

The Proton acceptor role is filled by histidine 137. Positions 137 and 175 each coordinate hexadecanoyl-CoA. Glutamate 211 is a catalytic residue. A hexadecanoyl-CoA-binding site is contributed by glutamate 240.

Belongs to the LpxL/LpxM/LpxP family.

The protein localises to the cell inner membrane. It catalyses the reaction a 2,6-O-bis(alpha-D-mannopyranosyl)-1-phosphatidyl-1D-myo-inositol + an acyl-CoA = a 2-O-(alpha-D-mannosyl)-6-O-(6-O-acyl-alpha-D-mannosyl)-1-phosphatidyl-1D-myo-inositol + CoA. The catalysed reaction is a 1,2-diacyl-sn-glycero-3-phospho-[alpha-D-mannopyranosyl-(1&lt;-&gt;6)-D-myo-inositol] + an acyl-CoA = a 1,2-diacyl-sn-glycero-3-phospho-[alpha-D-6-acyl-mannopyranosyl-(1&lt;-&gt;6)-D-myo-inositol] + CoA. Its pathway is phospholipid metabolism; phosphatidylinositol metabolism. Catalyzes the transfer of a palmitoyl moiety from palmitoyl-CoA to the 6-position of the mannose ring linked to the 2-position of myo-inositol in phosphatidyl-myo-inositol monomannoside (PIM1) or dimannoside (PIM2). Essential for growth and survival in axenic cultures and during macrophage infection and in a mouse model of infection. In Mycobacterium tuberculosis (strain ATCC 25618 / H37Rv), this protein is Phosphatidylinositol mannoside acyltransferase.